A 114-amino-acid polypeptide reads, in one-letter code: Endoribonuclease MazF2 (114 aa).

The protein belongs to the PemK/MazF family. As to quaternary structure, probably forms a complex with cognate antitoxin MazE2.

In terms of biological role, toxic component of a type II toxin-antitoxin (TA) system. Acts as an endoribonuclease on single-strand RNA, cleaving between the second and third bases in the sequences CUCCU and UUCCU. Neutralized by coexpression with cognate antitoxin MazE2. The sequence is that of Endoribonuclease MazF2 (mazF2) from Mycobacterium bovis (strain ATCC BAA-935 / AF2122/97).